We begin with the raw amino-acid sequence, 430 residues long: Ribulose bisphosphate carboxylase (430 aa).

Lysine 160 serves as the catalytic Proton acceptor. Substrate is bound at residue lysine 162. Residues lysine 186, aspartate 188, and glutamate 189 each coordinate Mg(2+). At lysine 186 the chain carries N6-carboxylysine. The active-site Proton acceptor is histidine 278. Substrate-binding positions include arginine 279, histidine 311, serine 348–glycine 350, and glutamine 370–glycine 373.

It belongs to the RuBisCO large chain family. Type III subfamily. Homodimer or homodecamer. In contrast to form I RuBisCO, the form III RuBisCO is composed solely of large subunits. Mg(2+) serves as cofactor.

It carries out the reaction 2 (2R)-3-phosphoglycerate + 2 H(+) = D-ribulose 1,5-bisphosphate + CO2 + H2O. The enzyme catalyses D-ribulose 1,5-bisphosphate + O2 = 2-phosphoglycolate + (2R)-3-phosphoglycerate + 2 H(+). Functionally, catalyzes the addition of molecular CO(2) and H(2)O to ribulose 1,5-bisphosphate (RuBP), generating two molecules of 3-phosphoglycerate (3-PGA). Functions in an archaeal AMP degradation pathway, together with AMP phosphorylase and R15P isomerase. In Pyrococcus horikoshii (strain ATCC 700860 / DSM 12428 / JCM 9974 / NBRC 100139 / OT-3), this protein is Ribulose bisphosphate carboxylase.